We begin with the raw amino-acid sequence, 346 residues long: Dimethyladenosine transferase 1, mitochondrial (346 aa).

The N-terminal 27 residues, 1–27, are a transit peptide targeting the mitochondrion; it reads MATQGVLAKYRLPPLPTIGEIIKLFNL. S-adenosyl-L-methionine contacts are provided by Asn-36, Leu-38, Gly-63, Glu-85, Lys-86, Asp-111, Ile-112, and Asn-141.

The protein belongs to the class I-like SAM-binding methyltransferase superfamily. rRNA adenine N(6)-methyltransferase family. KsgA subfamily.

The protein resides in the mitochondrion. The enzyme catalyses adenosine(N)/adenosine(N+1) in rRNA + 4 S-adenosyl-L-methionine = N(6)-dimethyladenosine(N)/N(6)-dimethyladenosine(N+1) in rRNA + 4 S-adenosyl-L-homocysteine + 4 H(+). Mitochondrial methyltransferase which uses S-adenosyl methionine to dimethylate two highly conserved adjacent adenosine residues (A1583 and A1584) within the loop of helix 45 at the 3-prime end of 12S rRNA, thereby regulating the assembly or stability of the small subunit of the mitochondrial ribosome. Also required for basal transcription of mitochondrial DNA, probably via its interaction with POLRMT and TFAM. Stimulates transcription independently of the methyltransferase activity. In Xenopus tropicalis (Western clawed frog), this protein is Dimethyladenosine transferase 1, mitochondrial (tfb1m).